A 308-amino-acid polypeptide reads, in one-letter code: Aspartate carbamoyltransferase catalytic subunit (308 aa).

Positions 57 and 58 each coordinate carbamoyl phosphate. K86 lines the L-aspartate pocket. Carbamoyl phosphate-binding residues include R107, H135, and Q138. L-aspartate is bound by residues R168 and R228. Positions 267 and 268 each coordinate carbamoyl phosphate.

The protein belongs to the aspartate/ornithine carbamoyltransferase superfamily. ATCase family. As to quaternary structure, heterododecamer (2C3:3R2) of six catalytic PyrB chains organized as two trimers (C3), and six regulatory PyrI chains organized as three dimers (R2).

It catalyses the reaction carbamoyl phosphate + L-aspartate = N-carbamoyl-L-aspartate + phosphate + H(+). The protein operates within pyrimidine metabolism; UMP biosynthesis via de novo pathway; (S)-dihydroorotate from bicarbonate: step 2/3. Its function is as follows. Catalyzes the condensation of carbamoyl phosphate and aspartate to form carbamoyl aspartate and inorganic phosphate, the committed step in the de novo pyrimidine nucleotide biosynthesis pathway. The chain is Aspartate carbamoyltransferase catalytic subunit from Leptospira borgpetersenii serovar Hardjo-bovis (strain JB197).